Reading from the N-terminus, the 166-residue chain is Protein-export protein SecB (166 aa).

Residues 1 to 16 show a composition bias toward polar residues; sequence MTDTSAAGNPTPGQQP. The disordered stretch occupies residues 1–21; sequence MTDTSAAGNPTPGQQPANPPS.

It belongs to the SecB family. As to quaternary structure, homotetramer, a dimer of dimers. One homotetramer interacts with 1 SecA dimer.

Its subcellular location is the cytoplasm. In terms of biological role, one of the proteins required for the normal export of preproteins out of the cell cytoplasm. It is a molecular chaperone that binds to a subset of precursor proteins, maintaining them in a translocation-competent state. It also specifically binds to its receptor SecA. The polypeptide is Protein-export protein SecB (Hyphomonas neptunium (strain ATCC 15444)).